The following is a 314-amino-acid chain: tRNA dimethylallyltransferase (314 aa).

12 to 19 provides a ligand contact to ATP; that stretch reads GPTGTGKS. 14 to 19 lines the substrate pocket; that stretch reads TGTGKS.

It belongs to the IPP transferase family. As to quaternary structure, monomer. It depends on Mg(2+) as a cofactor.

The enzyme catalyses adenosine(37) in tRNA + dimethylallyl diphosphate = N(6)-dimethylallyladenosine(37) in tRNA + diphosphate. In terms of biological role, catalyzes the transfer of a dimethylallyl group onto the adenine at position 37 in tRNAs that read codons beginning with uridine, leading to the formation of N6-(dimethylallyl)adenosine (i(6)A). The protein is tRNA dimethylallyltransferase of Mycolicibacterium paratuberculosis (strain ATCC BAA-968 / K-10) (Mycobacterium paratuberculosis).